Consider the following 1020-residue polypeptide: Sodium/potassium-transporting ATPase subunit alpha-2 (1020 aa).

Residues 1–5 constitute a propeptide that is removed on maturation; sequence MGRGA. Positions 1–31 are disordered; sequence MGRGAGREYSPAATTAENGGGKKKQKEKELD. At 6 to 85 the chain is on the cytoplasmic side; it reads GREYSPAATT…NALTPPPTTP (80 aa). Ser-10 carries the post-translational modification Phosphoserine. The tract at residues 80–82 is interaction with phosphoinositide-3 kinase; sequence PPP. A helical transmembrane segment spans residues 86–106; the sequence is EWVKFCRQLFGGFSILLWIGA. At 107-129 the chain is on the extracellular side; that stretch reads ILCFLAYGIQAAMEDEPSNDNLY. A helical transmembrane segment spans residues 130 to 150; sequence LGVVLAAVVIVTGCFSYYQEA. At 151 to 286 the chain is on the cytoplasmic side; the sequence is KSSKIMDSFK…VGRTPIAMEI (136 aa). Residues 212–227 show a composition bias toward polar residues; the sequence is DNSSLTGESEPQTRSP. The interval 212–231 is disordered; the sequence is DNSSLTGESEPQTRSPEFTH. A helical membrane pass occupies residues 287–306; it reads EHFIQLITGVAVFPGVSFFV. Topologically, residues 307-318 are extracellular; the sequence is LSLILGYSWLEA. The helical transmembrane segment at 319–336 threads the bilayer; it reads VIFLIGIIVANVPEGLLA. The Cytoplasmic portion of the chain corresponds to 337–769; it reads TVTVCLTLTA…EEGRLVFDNL (433 aa). Residue Asp-374 is the 4-aspartylphosphate intermediate of the active site. 4 positions are modified to phosphoserine: Ser-439, Ser-450, Ser-496, and Ser-559. Phosphothreonine is present on Thr-570. Residues Ser-587 and Ser-672 each carry the phosphoserine modification. Residues Asp-714 and Asp-718 each contribute to the Mg(2+) site. The chain crosses the membrane as a helical span at residues 770–789; it reads KKSIAYTLTSNIPEITPFLL. Topologically, residues 790-799 are extracellular; the sequence is FIIANIPLPL. Residues 800-820 traverse the membrane as a helical segment; sequence GTVTILCIDLGTDMVPAISLA. Residues 821–840 are Cytoplasmic-facing; sequence YEAAESDIMKRQPRNSQTDK. Ser-826 carries the post-translational modification Phosphoserine. A helical transmembrane segment spans residues 841-863; the sequence is LVNERLISMAYGQIGMIQALGGF. The Extracellular segment spans residues 864 to 915; the sequence is FTYFVILAENGFLPSRLLGIRLDWDDRTMNDLEDSYGQEWTYEQRKVVEFTC. A helical membrane pass occupies residues 916–935; sequence HTAFFASIVVVQWADLIICK. Over 936 to 948 the chain is Cytoplasmic; it reads TRRNSVFQQGMKN. Ser-940 carries the phosphoserine; by PKA modification. Residues 949 to 967 form a helical membrane-spanning segment; it reads KILIFGLLEETALAAFLSY. At 968-982 the chain is on the extracellular side; sequence CPGMGVALRMYPLKV. A helical membrane pass occupies residues 983-1003; the sequence is TWWFCAFPYSLLIFIYDEVRK. The Cytoplasmic segment spans residues 1004 to 1020; the sequence is LILRRYPGGWVEKETYY.

Belongs to the cation transport ATPase (P-type) (TC 3.A.3) family. Type IIC subfamily. In terms of assembly, the sodium/potassium-transporting ATPase is composed of a catalytic alpha subunit, an auxiliary non-catalytic beta subunit and an additional regulatory subunit. Interacts with regulatory subunit FXYD1.

It localises to the membrane. Its subcellular location is the cell membrane. The enzyme catalyses K(+)(out) + Na(+)(in) + ATP + H2O = K(+)(in) + Na(+)(out) + ADP + phosphate + H(+). Its function is as follows. This is the catalytic component of the active enzyme, which catalyzes the hydrolysis of ATP coupled with the exchange of sodium and potassium ions across the plasma membrane. This action creates the electrochemical gradient of sodium and potassium, providing the energy for active transport of various nutrients. In Pongo abelii (Sumatran orangutan), this protein is Sodium/potassium-transporting ATPase subunit alpha-2 (ATP1A2).